The chain runs to 143 residues: Large ribosomal subunit protein uL11 (143 aa).

This sequence belongs to the universal ribosomal protein uL11 family. In terms of assembly, part of the ribosomal stalk of the 50S ribosomal subunit. Interacts with L10 and the large rRNA to form the base of the stalk. L10 forms an elongated spine to which L12 dimers bind in a sequential fashion forming a multimeric L10(L12)X complex. Post-translationally, one or more lysine residues are methylated.

Functionally, forms part of the ribosomal stalk which helps the ribosome interact with GTP-bound translation factors. This chain is Large ribosomal subunit protein uL11, found in Rhizobium johnstonii (strain DSM 114642 / LMG 32736 / 3841) (Rhizobium leguminosarum bv. viciae).